The sequence spans 421 residues: Probable G-protein coupled receptor 151 (421 aa).

At 1–44 the chain is on the extracellular side; sequence MGKATLAVFADSDSSNMNESFAHLHFAGGYLPSDSKGWRTIIPS. Asparagine 18 carries N-linked (GlcNAc...) asparagine glycosylation. Residues 45-65 form a helical membrane-spanning segment; sequence LLAAVCLVGFVGNLCVIGLLL. Residues 66 to 74 lie on the Cytoplasmic side of the membrane; it reads HGVWKRKPS. The helical transmembrane segment at 75–95 threads the bilayer; sequence MIHSLILNLSLADISLLLFSA. At 96–122 the chain is on the extracellular side; that stretch reads PVRATAYVKGVWDLGWFVCKSSDWFTH. An intrachain disulfide couples cysteine 114 to cysteine 190. The helical transmembrane segment at 123-143 threads the bilayer; it reads MCMAAKSLTFVVVAKVCFMYA. Over 144–156 the chain is Cytoplasmic; that stretch reads SDPAKPVGTHNCT. A helical transmembrane segment spans residues 157 to 177; that stretch reads IWSLLGAIWVVASLLPLPEWF. The Extracellular segment spans residues 178–204; it reads FSTTRHHAGVEMCLVDVPAVAAEFMSL. Residues 205-225 form a helical membrane-spanning segment; that stretch reads FGKLYPLLVFCLPLLLAGFYF. Topologically, residues 226 to 258 are cytoplasmic; the sequence is WRAYNQCKIRCAKTQNLRNQMRSKQLTVMLLST. The helical transmembrane segment at 259–279 threads the bilayer; it reads AVTSALLWLPEWIAWLWVWHL. Residues 280-289 are Extracellular-facing; the sequence is KAGGPMPPQG. The helical transmembrane segment at 290-310 threads the bilayer; that stretch reads FIALSQVLMFSISTVNPLIFL. Residues 311-421 are Cytoplasmic-facing; it reads MMSEEFKAGL…HEGQETKGCN (111 aa). 2 disordered regions span residues 346–381 and 394–421; these read IETL…TDKV and HERD…KGCN. 2 stretches are compositionally biased toward basic and acidic residues: residues 364–379 and 409–421; these read DTDR…ETTD and PWEH…KGCN.

It belongs to the G-protein coupled receptor 1 family. As to expression, exclusively expressed in neurons of the habenular complex. The expression is particularly prominent in the medial habenular nucleus, whereas the lateral habenular nucleus exhibited a lower level of expression.

It localises to the cell membrane. Functionally, orphan receptor. This Rattus norvegicus (Rat) protein is Probable G-protein coupled receptor 151 (Gpr151).